The chain runs to 100 residues: Aspartyl/glutamyl-tRNA(Asn/Gln) amidotransferase subunit C (100 aa).

It belongs to the GatC family. Heterotrimer of A, B and C subunits.

It carries out the reaction L-glutamyl-tRNA(Gln) + L-glutamine + ATP + H2O = L-glutaminyl-tRNA(Gln) + L-glutamate + ADP + phosphate + H(+). It catalyses the reaction L-aspartyl-tRNA(Asn) + L-glutamine + ATP + H2O = L-asparaginyl-tRNA(Asn) + L-glutamate + ADP + phosphate + 2 H(+). Functionally, allows the formation of correctly charged Asn-tRNA(Asn) or Gln-tRNA(Gln) through the transamidation of misacylated Asp-tRNA(Asn) or Glu-tRNA(Gln) in organisms which lack either or both of asparaginyl-tRNA or glutaminyl-tRNA synthetases. The reaction takes place in the presence of glutamine and ATP through an activated phospho-Asp-tRNA(Asn) or phospho-Glu-tRNA(Gln). The sequence is that of Aspartyl/glutamyl-tRNA(Asn/Gln) amidotransferase subunit C from Dictyoglomus turgidum (strain DSM 6724 / Z-1310).